The following is a 724-amino-acid chain: Probable dipeptidyl-peptidase 5 (724 aa).

A signal peptide spans 1–19 (MGALTWLSVVAAAASTALA). Residues asparagine 76, asparagine 97, asparagine 154, asparagine 257, asparagine 383, and asparagine 453 are each glycosylated (N-linked (GlcNAc...) asparagine). The Charge relay system role is filled by serine 563. N-linked (GlcNAc...) asparagine glycosylation occurs at asparagine 610. Residues aspartate 646 and histidine 678 each act as charge relay system in the active site.

It belongs to the peptidase S9C family.

It is found in the secreted. Functionally, extracellular dipeptidyl-peptidase which removes N-terminal dipeptides sequentially from polypeptides having unsubstituted N-termini. The chain is Probable dipeptidyl-peptidase 5 (dpp5) from Aspergillus clavatus (strain ATCC 1007 / CBS 513.65 / DSM 816 / NCTC 3887 / NRRL 1 / QM 1276 / 107).